Consider the following 421-residue polypeptide: Glutamate dehydrogenase (421 aa).

Residue Lys105 is part of the active site. 220–226 (GYGNAGY) is a binding site for NAD(+).

It belongs to the Glu/Leu/Phe/Val dehydrogenases family. Homohexamer.

It is found in the cytoplasm. The protein localises to the chromosome. The catalysed reaction is L-glutamate + NAD(+) + H2O = 2-oxoglutarate + NH4(+) + NADH + H(+). It carries out the reaction L-glutamate + NADP(+) + H2O = 2-oxoglutarate + NH4(+) + NADPH + H(+). The polypeptide is Glutamate dehydrogenase (gdhA) (Thermococcus kodakarensis (strain ATCC BAA-918 / JCM 12380 / KOD1) (Pyrococcus kodakaraensis (strain KOD1))).